Here is a 152-residue protein sequence, read N- to C-terminus: Succinate dehydrogenase [ubiquinone] cytochrome b small subunit, mitochondrial (152 aa).

A mitochondrion-targeting transit peptide spans 1-21 (MATLLRVSSLCRANRASAFKS). The Mitochondrial matrix segment spans residues 22-56 (LLIRPVPCLTQDHHMVQTSQIHTSPNHHAGSKAAS). The chain crosses the membrane as a helical span at residues 57-78 (MHWTSERALSVALLGLLPAAYL). Residues 79 to 83 (YPGAA) are Mitochondrial intermembrane-facing. A helical membrane pass occupies residues 84 to 104 (MDYSLAAALTLHGHWGLGQVV). Heme b is bound at residue H95. Residues 105–113 (TDYVHGDAK) are Mitochondrial matrix-facing. Y107 is a binding site for a ubiquinone. A helical membrane pass occupies residues 114–135 (IKMANTSLFALSALTFAGLCYF). At 136-152 (NYHDVGICKAVSMLWSL) the chain is on the mitochondrial intermembrane side.

Belongs to the CybS family. In terms of assembly, component of complex II composed of four subunits: the flavoprotein (FP) SDHA, iron-sulfur protein (IP) SDHB, and a cytochrome b560 composed of SDHC and SDHD.

The protein resides in the mitochondrion inner membrane. The protein operates within carbohydrate metabolism; tricarboxylic acid cycle. Functionally, membrane-anchoring subunit of succinate dehydrogenase (SDH) that is involved in complex II of the mitochondrial electron transport chain and is responsible for transferring electrons from succinate to ubiquinone (coenzyme Q). SDH also oxidizes malate to the non-canonical enol form of oxaloacetate, enol-oxaloacetate. Enol-oxaloacetate, which is a potent inhibitor of the succinate dehydrogenase activity, is further isomerized into keto-oxaloacetate. The sequence is that of Succinate dehydrogenase [ubiquinone] cytochrome b small subunit, mitochondrial (sdhd) from Xenopus tropicalis (Western clawed frog).